The following is a 34-amino-acid chain: PRRRRRSSRPVRRRRRYRRSTAARRRRRVVRRRR.

Positions 1-34 (PRRRRRSSRPVRRRRRYRRSTAARRRRRVVRRRR) are disordered.

As to expression, testis.

The protein resides in the nucleus. The protein localises to the chromosome. Its function is as follows. Protamines substitute for histones in the chromatin of sperm during the haploid phase of spermatogenesis. They compact sperm DNA into a highly condensed, stable and inactive complex. The polypeptide is Protamine-Z1/Z2 (Sarda orientalis (Striped bonito)).